The following is a 4007-amino-acid chain: PKS-NRPS hybrid synthetase psoA (4007 aa).

One can recognise a Ketosynthase family 3 (KS3) domain in the interval K8–S444. Active-site for beta-ketoacyl synthase activity residues include C182, H321, and H364. The segment at V575–L897 is malonyl-CoA:ACP transacylase (MAT) domain. The interval H969–E1105 is N-terminal hotdog fold. Residues H969–M1147 are dehydratase (DH) domain. The PKS/mFAS DH domain maps to H969–K1276. Residue H1001 is the Proton acceptor; for dehydratase activity of the active site. The C-terminal hotdog fold stretch occupies residues D1120 to K1276. The active-site Proton donor; for dehydratase activity is the D1179. Residues T2131–V2305 form a ketoreductase (KR) domain region. One can recognise a Carrier 1 domain in the interval E2418–L2495. At S2455 the chain carries O-(pantetheine 4'-phosphoryl)serine. Residues P2513 to P2550 form a disordered region. Over residues R2518–D2531 the composition is skewed to basic and acidic residues. The interval Q2589 to V2885 is condensation (C) domain. Positions T3076–Q3478 are adenylation (A) domain. Residues T3576–S3652 form the Carrier 2 domain. Position 3612 is an O-(pantetheine 4'-phosphoryl)serine (S3612). The tract at residues L3696–I3920 is reductase (R) domain.

In the C-terminal section; belongs to the NRP synthetase family.

It functions in the pathway secondary metabolite biosynthesis. Its function is as follows. PKS-NRPS hybrid synthetase; part of the gene cluster that mediates the biosynthesis of pseurotin A, a competitive inhibitor of chitin synthase and an inducer of nerve-cell proliferation. The PKS-NRPS hybrid synthetase psoA is responsible for the biosynthesis of azaspirene, one of the first intermediates having the 1-oxa-7-azaspiro[4,4]-non-2-ene-4,6-dione core of pseurotin, via condensation of one acetyl-CoA, 4 malonyl-CoA, and a L-phenylalanine molecule. The dual-functional monooxygenase/methyltransferase psoF seems to be involved in the addition of the C3 methyl group onto the pseurotin scaffold. Azaspirene is then converted to synerazol through 4 steps including oxidation of C17 by the cytochrome P450 monooxygenase psoD, O-methylation of the hydroxy group of C8 by the methyltransferase psoC, and the trans-to-cis isomerization of the C13 olefin by the glutathione S-transferase psoE. The fourth step of synerazol production is performed by the dual-functional monooxygenase/methyltransferase psoF which seems to catalyze the epoxidation of the intermediate deepoxy-synerazol. Synerazol can be attacked by a water molecule nonenzymatically at two different positions to yield two diol products, pseurotin A and pseurotin D. This is PKS-NRPS hybrid synthetase psoA from Aspergillus fumigatus (strain ATCC MYA-4609 / CBS 101355 / FGSC A1100 / Af293) (Neosartorya fumigata).